The chain runs to 184 residues: dCTP deaminase (184 aa).

107–112 contributes to the dCTP binding site; it reads KSTYAR. Catalysis depends on glutamate 133, which acts as the Proton donor/acceptor. The dCTP site is built by glutamine 152, tyrosine 166, and glutamine 176.

The protein belongs to the dCTP deaminase family. In terms of assembly, homotrimer.

It carries out the reaction dCTP + H2O + H(+) = dUTP + NH4(+). The protein operates within pyrimidine metabolism; dUMP biosynthesis; dUMP from dCTP (dUTP route): step 1/2. Its function is as follows. Catalyzes the deamination of dCTP to dUTP. The chain is dCTP deaminase from Acidiphilium cryptum (strain JF-5).